The sequence spans 275 residues: Light-independent protochlorophyllide reductase iron-sulfur ATP-binding protein (275 aa).

Residues 12-17 (GIGKST) and K41 contribute to the ATP site. Mg(2+) is bound at residue S16. Residues C97 and C131 each contribute to the [4Fe-4S] cluster site. 182-183 (NR) is a binding site for ATP.

Belongs to the NifH/BchL/ChlL family. As to quaternary structure, homodimer. Protochlorophyllide reductase is composed of three subunits; BchL, BchN and BchB. [4Fe-4S] cluster serves as cofactor.

The catalysed reaction is chlorophyllide a + oxidized 2[4Fe-4S]-[ferredoxin] + 2 ADP + 2 phosphate = protochlorophyllide a + reduced 2[4Fe-4S]-[ferredoxin] + 2 ATP + 2 H2O. It functions in the pathway porphyrin-containing compound metabolism; bacteriochlorophyll biosynthesis (light-independent). In terms of biological role, component of the dark-operative protochlorophyllide reductase (DPOR) that uses Mg-ATP and reduced ferredoxin to reduce ring D of protochlorophyllide (Pchlide) to form chlorophyllide a (Chlide). This reaction is light-independent. The L component serves as a unique electron donor to the NB-component of the complex, and binds Mg-ATP. The sequence is that of Light-independent protochlorophyllide reductase iron-sulfur ATP-binding protein from Prosthecochloris aestuarii (strain DSM 271 / SK 413).